Reading from the N-terminus, the 203-residue chain is Small ribosomal subunit protein uS4 (203 aa).

The S4 RNA-binding domain maps to 93 to 158 (LRLDNVVYRL…QQLVTRFLDL (66 aa)).

The protein belongs to the universal ribosomal protein uS4 family. As to quaternary structure, part of the 30S ribosomal subunit. Contacts protein S5. The interaction surface between S4 and S5 is involved in control of translational fidelity.

Functionally, one of the primary rRNA binding proteins, it binds directly to 16S rRNA where it nucleates assembly of the body of the 30S subunit. In terms of biological role, with S5 and S12 plays an important role in translational accuracy. This Akkermansia muciniphila (strain ATCC BAA-835 / DSM 22959 / JCM 33894 / BCRC 81048 / CCUG 64013 / CIP 107961 / Muc) protein is Small ribosomal subunit protein uS4.